We begin with the raw amino-acid sequence, 47 residues long: Ruminococcin-A (47 aa).

The signal sequence occupies residues 1-23 (MRNDVLTLTNPMEENELEQILGG). Residues threonine 30 and threonine 39 each carry the 2,3-didehydrobutyrine modification. Positions 30–35 (TISHEC) form a cross-link, beta-methyllanthionine (Thr-Cys). Positions 32–46 (SHECNMNTWQFLFTC) form a cross-link, lanthionine (Ser-Cys). Residues 45–47 (TCC) constitute a cross-link (beta-methyllanthionine (Thr-Cys)).

The protein belongs to the type A lantibiotic family. In terms of processing, maturation of lantibiotics involves the enzymatic conversion of Thr, and Ser into dehydrated AA and the formation of thioether bonds with cysteine. This is followed by membrane translocation and cleavage of the modified precursor.

The protein localises to the secreted. Functionally, lanthionine-containing peptide antibiotic (lantibiotic) active on Gram-positive bacteria. The bactericidal activity of lantibiotics is based on depolarization of energized bacterial cytoplasmic membranes, initiated by the formation of aqueous transmembrane pores. Ruminococcin A is a broad spectrum bacteriocin exhibiting activity against a wide range of pathogenic clostridia and B.longum. In Blautia hansenii (Ruminococcus hansenii), this protein is Ruminococcin-A (rumA1).